The sequence spans 451 residues: Tubulin alpha-1B chain (451 aa).

Residues 1 to 4 (MREC) carry the MREC motif motif. Gly-10, Gln-11, Ala-12, and Gln-15 together coordinate GTP. An N6,N6,N6-trimethyllysine; alternate modification is found at Lys-40. Position 40 is an N6-acetyllysine; alternate (Lys-40). Ser-48 carries the post-translational modification Phosphoserine. Residues Glu-71, Ala-99, Ser-140, Gly-143, Gly-144, Thr-145, Gly-146, Thr-179, Glu-183, Asn-206, Tyr-224, and Asn-228 each contribute to the GTP site. Glu-71 contacts Mg(2+). Ser-232 carries the phosphoserine modification. Leu-252 serves as a coordination point for GTP. Glu-254 is a catalytic residue. Tyr-282 carries the 3'-nitrotyrosine modification. Lys-326 participates in a covalent cross-link: Glycyl lysine isopeptide (Lys-Gly) (interchain with G-Cter in ubiquitin). Residue Arg-339 is modified to Omega-N-methylarginine. Residue Lys-370 forms a Glycyl lysine isopeptide (Lys-Gly) (interchain with G-Cter in ubiquitin) linkage. Phosphoserine is present on Ser-439. Glu-443 and Glu-445 each carry 5-glutamyl polyglutamate. Tyr-451 is subject to 3'-nitrotyrosine.

The protein belongs to the tubulin family. Heterodimer of alpha- and beta-tubulin. A typical microtubule is a hollow water-filled tube with an outer diameter of 25 nm and an inner diameter of 15 nM. Alpha-beta heterodimers associate head-to-tail to form protofilaments running lengthwise along the microtubule wall with the beta-tubulin subunit facing the microtubule plus end conferring a structural polarity. Microtubules usually have 13 protofilaments but different protofilament numbers can be found in some organisms and specialized cells. Interacts with gamma-tubulin; the interaction allows microtubules to nucleate from the gamma-tubulin ring complex (gTuRC). Nascent microtubule interacts (via alpha-tubulin MREC motif) with TTC5/STRAP; this interaction may result in tubulin mRNA-targeted degradation. Component of sperm flagellar doublet microtubules. Mg(2+) serves as cofactor. In terms of processing, some glutamate residues at the C-terminus are polyglycylated, resulting in polyglycine chains on the gamma-carboxyl group. Glycylation is mainly limited to tubulin incorporated into axonemes (cilia and flagella) whereas glutamylation is prevalent in neuronal cells, centrioles, axonemes, and the mitotic spindle. Both modifications can coexist on the same protein on adjacent residues, and lowering polyglycylation levels increases polyglutamylation, and reciprocally. Cilia and flagella glycylation is required for their stability and maintenance. Flagella glycylation controls sperm motility. Some glutamate residues at the C-terminus are polyglutamylated, resulting in polyglutamate chains on the gamma-carboxyl group. Polyglutamylation plays a key role in microtubule severing by spastin (SPAST). SPAST preferentially recognizes and acts on microtubules decorated with short polyglutamate tails: severing activity by SPAST increases as the number of glutamates per tubulin rises from one to eight, but decreases beyond this glutamylation threshold. Glutamylation is also involved in cilia motility. Post-translationally, acetylation of alpha chains at Lys-40 is located inside the microtubule lumen. This modification has been correlated with increased microtubule stability, intracellular transport and ciliary assembly. In terms of processing, methylation of alpha chains at Lys-40 is found in mitotic microtubules and is required for normal mitosis and cytokinesis contributing to genomic stability. Nitration of Tyr-451 is irreversible and interferes with normal dynein intracellular distribution. Post-translationally, undergoes a tyrosination/detyrosination cycle, the cyclic removal and re-addition of a C-terminal tyrosine residue by the enzymes tubulin tyrosine carboxypeptidase (MATCAP1, VASH1 or VASH2) and tubulin tyrosine ligase (TTL), respectively. In terms of processing, tyrosination promotes microtubule interaction with CAP-Gly domain-containing proteins such as CLIP1, CLIP2 and DCTN1. Tyrosination regulates the initiation of dynein-dynactin motility via interaction with DCTN1, which brings the dynein-dynactin complex into contact with microtubules. In neurons, tyrosinated tubulins mediate the initiation of retrograde vesicle transport. Detyrosination is involved in metaphase plate congression by guiding chromosomes during mitosis: detyrosination promotes interaction with CENPE, promoting pole-proximal transport of chromosomes toward the equator. Detyrosination increases microtubules-dependent mechanotransduction in dystrophic cardiac and skeletal muscle. In cardiomyocytes, detyrosinated microtubules are required to resist to contractile compression during contraction: detyrosination promotes association with desmin (DES) at force-generating sarcomeres, leading to buckled microtubules and mechanical resistance to contraction.

It localises to the cytoplasm. The protein resides in the cytoskeleton. It carries out the reaction GTP + H2O = GDP + phosphate + H(+). Tubulin is the major constituent of microtubules, protein filaments consisting of alpha- and beta-tubulin heterodimers. Microtubules grow by the addition of GTP-tubulin dimers to the microtubule end, where a stabilizing cap forms. Below the cap, tubulin dimers are in GDP-bound state, owing to GTPase activity of alpha-tubulin. In Pan troglodytes (Chimpanzee), this protein is Tubulin alpha-1B chain (TUBA1B).